The primary structure comprises 837 residues: Protein translocase subunit SecA (837 aa).

ATP is bound by residues Gln-87, Gly-105 to Thr-109, and Asp-494. The segment at His-788–Lys-837 is disordered. Zn(2+) contacts are provided by Cys-823, Cys-825, Cys-834, and Cys-835.

Belongs to the SecA family. In terms of assembly, monomer and homodimer. Part of the essential Sec protein translocation apparatus which comprises SecA, SecYEG and auxiliary proteins SecDF-YajC and YidC. It depends on Zn(2+) as a cofactor.

It is found in the cell inner membrane. Its subcellular location is the cytoplasm. It catalyses the reaction ATP + H2O + cellular proteinSide 1 = ADP + phosphate + cellular proteinSide 2.. In terms of biological role, part of the Sec protein translocase complex. Interacts with the SecYEG preprotein conducting channel. Has a central role in coupling the hydrolysis of ATP to the transfer of proteins into and across the cell membrane, serving as an ATP-driven molecular motor driving the stepwise translocation of polypeptide chains across the membrane. The polypeptide is Protein translocase subunit SecA (Maridesulfovibrio salexigens (strain ATCC 14822 / DSM 2638 / NCIMB 8403 / VKM B-1763) (Desulfovibrio salexigens)).